The primary structure comprises 228 residues: Protein GlxC (228 aa).

Belongs to the FwdC/FmdC family.

This is Protein GlxC (glxC) from Rhizobium meliloti (strain 1021) (Ensifer meliloti).